The sequence spans 125 residues: Small ribosomal subunit protein eS6 (125 aa).

This sequence belongs to the eukaryotic ribosomal protein eS6 family.

This chain is Small ribosomal subunit protein eS6, found in Thermococcus onnurineus (strain NA1).